The primary structure comprises 278 residues: Ribosomal RNA small subunit methyltransferase A (278 aa).

S-adenosyl-L-methionine is bound by residues Asn28, Leu30, Gly55, Glu77, Asp103, and Asn122.

The protein belongs to the class I-like SAM-binding methyltransferase superfamily. rRNA adenine N(6)-methyltransferase family. RsmA subfamily.

Its subcellular location is the cytoplasm. It carries out the reaction adenosine(1518)/adenosine(1519) in 16S rRNA + 4 S-adenosyl-L-methionine = N(6)-dimethyladenosine(1518)/N(6)-dimethyladenosine(1519) in 16S rRNA + 4 S-adenosyl-L-homocysteine + 4 H(+). Functionally, specifically dimethylates two adjacent adenosines (A1518 and A1519) in the loop of a conserved hairpin near the 3'-end of 16S rRNA in the 30S particle. May play a critical role in biogenesis of 30S subunits. The protein is Ribosomal RNA small subunit methyltransferase A of Cereibacter sphaeroides (strain ATCC 17025 / ATH 2.4.3) (Rhodobacter sphaeroides).